The primary structure comprises 155 residues: Protein FAM163B (155 aa).

Residues V6–C26 form a helical membrane-spanning segment.

It belongs to the FAM163 family.

It localises to the membrane. The chain is Protein FAM163B (fam163b) from Xenopus tropicalis (Western clawed frog).